We begin with the raw amino-acid sequence, 594 residues long: MNKIKGGRHKSPVKLFEVRLYNAEANVIVLYGNSMDTSARLSGIVVLSVSSPIRVKNIKLRLSGRSFVCWADESRHASPGNRIRRQVVQILDKSWSFLAPNESAKVIDQGNYEYPFYYELPPDIPDSIEGIPGCHIIYTLTASLERATQPPTNLETALQFRVIRTIPPNSLDLMHSVSVSDIWPLKVNYETSIPSKVYAIGSEIPVNITLYPLLKGLDVGKVTLVLKEYCTLFITSKAYSSTCRKEFKRALVKKTIPGLPMVDDYWQDQIMVKIPDSLGECTQDCDLNCIRVHHKLRLSISLLNPDGHVSELRNSLPLSLVISPVMFGARPTEGVFTGDHNSYVNENILPSYDKHVFDVLWDGIPSENPQLQSGFTTPNLSRRNSSDFGPNSPVNIHSNPVPISGQQPSSPASNSNANFFFGSSPQSMSSEQTDMMSPITSPLAPFSGVTRRAARTRANSASSVFNSQLQPLQTDLLSPLPSPTSSNSRLPRVRSACTLNVQELSKIPPYYEAHSAFTNVLPLDGLPRYEEATRPSSPTESVEIPSNTTTIAPSPVPTIIAPALPSTPAPPLPSHPMATRKSLSSTNLVRRGVR.

Positions 368–398 (NPQLQSGFTTPNLSRRNSSDFGPNSPVNIHS) are enriched in polar residues. 2 disordered regions span residues 368-417 (NPQL…NSNA) and 531-594 (EATR…RGVR). Over residues 404-417 (SGQQPSSPASNSNA) the composition is skewed to low complexity. A compositionally biased stretch (polar residues) spans 534–552 (RPSSPTESVEIPSNTTTIA). A compositionally biased stretch (pro residues) spans 565-574 (PSTPAPPLPS). Ser-584 carries the post-translational modification Phosphoserine.

It belongs to the arrestin family.

The sequence is that of Arrestin domain-containing protein C584.15c from Schizosaccharomyces pombe (strain 972 / ATCC 24843) (Fission yeast).